The primary structure comprises 347 residues: Ubiquitin thioesterase Otu1 (347 aa).

Positions F5–A87 constitute a Ubiquitin-like domain. The segment at K8–A89 is UBX-like. The OTU domain occupies L150 to E274. The cys-loop stretch occupies residues V155–C161. The active site involves D158. C161 functions as the Nucleophile in the catalytic mechanism. Positions I213–I223 are variable-loop. The his-loop stretch occupies residues F263 to H267. Residue I266 coordinates substrate. Residue H267 is part of the active site. The S2 site stretch occupies residues L290–Q295. A C2H2-type zinc finger spans residues L317 to H341. The active site involves H341.

The enzyme catalyses Thiol-dependent hydrolysis of ester, thioester, amide, peptide and isopeptide bonds formed by the C-terminal Gly of ubiquitin (a 76-residue protein attached to proteins as an intracellular targeting signal).. Functionally, hydrolase that can remove conjugated ubiquitin from proteins and may therefore play an important regulatory role at the level of protein turnover by preventing degradation. Involved in the regulation of DNA damage repair. The protein is Ubiquitin thioesterase Otu1 of Drosophila melanogaster (Fruit fly).